A 224-amino-acid chain; its full sequence is MADEQEIMCKLENIKEIRNKTIQMEKIKSRLRTEFEALESEEKHLREYKQEMDLLLQEKMAHVEELRLIHADINVMENTIKQSESDLNKLLESTRRLHDEYKPLKEHVDALRMTLGLQRLPDLSQEEEKLSLDYFEKQKAEWQTEPQEPPIPESLAAAAAAAQQLQAARKQDARQTATFRQQPPPMKACLSCHQQIHRNAPICPLCKAKSRSRNPKKPKRKPDE.

Residues 12–97 (ENIKEIRNKT…NKLLESTRRL (86 aa)) are a coiled coil. 2 disordered regions span residues 166–185 (QAAR…QPPP) and 204–224 (PLCK…KPDE). Residues 189-206 (CLSCHQQIHRNAPICPLC) form a C4H2-type zinc finger. The span at 208–224 (AKSRSRNPKKPKRKPDE) shows a compositional bias: basic residues.

The protein localises to the nucleus. The protein resides in the cytoplasm. It is found in the postsynaptic cell membrane. Plays a role in GABAergic and V2 interneurons differentiation. Involved in motoneuron development and in neuromuscular junction formation. The protein is Zinc finger C4H2 domain-containing protein (zc4h2) of Danio rerio (Zebrafish).